The sequence spans 217 residues: GTP cyclohydrolase 1 (217 aa).

3 residues coordinate Zn(2+): cysteine 109, histidine 112, and cysteine 180.

The protein belongs to the GTP cyclohydrolase I family. In terms of assembly, homomer.

It catalyses the reaction GTP + H2O = 7,8-dihydroneopterin 3'-triphosphate + formate + H(+). It functions in the pathway cofactor biosynthesis; 7,8-dihydroneopterin triphosphate biosynthesis; 7,8-dihydroneopterin triphosphate from GTP: step 1/1. The sequence is that of GTP cyclohydrolase 1 from Aliivibrio salmonicida (strain LFI1238) (Vibrio salmonicida (strain LFI1238)).